The chain runs to 443 residues: 26S proteasome regulatory subunit 4 homolog A (443 aa).

Disordered regions lie at residues 1-55 and 87-108; these read MGQG…LPTV and RLKP…LRGT. Basic and acidic residues-rich tracts occupy residues 12-28 and 87-106; these read QGDR…KKFE and RLKP…DDLR. An ATP-binding site is contributed by 229–236; that stretch reads GEPGTGKT. Residues lysine 296 and lysine 433 each participate in a glycyl lysine isopeptide (Lys-Gly) (interchain with G-Cter in ubiquitin) cross-link.

It belongs to the AAA ATPase family. As to quaternary structure, component of the 19S regulatory particle (RP/PA700) base subcomplex of the 26S proteasome. The 26S proteasome is composed of a core protease (CP), known as the 20S proteasome, capped at one or both ends by the 19S regulatory particle (RP/PA700). The RP/PA700 complex is composed of at least 17 different subunits in two subcomplexes, the base and the lid, which form the portions proximal and distal to the 20S proteolytic core, respectively. Required for innate immunity. Interacts with UNI. As to expression, preferentially expressed in the root and shoot apical meristem.

The protein resides in the cytoplasm. It localises to the P-body. The protein localises to the nucleus. Its function is as follows. The 26S protease is involved in the ATP-dependent degradation of ubiquitinated proteins. The regulatory (or ATPase) complex confers ATP dependency and substrate specificity to the 26S complex. Interacts with transit peptides of proteins targeted to the chloroplast, and may be involved in the degradation of unimported plastid protein precursors. Is required for the maintenance of postembryonic root and shoot meristems. Has a specific role in the regulation of organs size. Acts redundantly with RPT2B in the regulation of gametogenesis. With RPT2B plays a critical role in 26S proteasome assembly. Acts as an upstream signaling component for inducing both defense and morphological phenotypes in the constitutive active uni-1D mutant. Acts as a negative regulator of endoreduplication in trichome cells. May function after the completion of the third endoreduplication step (8C to 16C) mediated by RHL1. Acts as a negative regulator of transcriptional gene silencing (TGS) at specific endogenous genes through DNA methylation. Promotes post-transcriptional gene silencing (PTGS) by limiting the degradation of transgene aberrant RNAs by the RNA quality control (RQC) machinery, thus favoring their entry into cytoplasmic siRNA bodies where they can trigger PTGS. Involved in tolerance to zinc deficiency, possibly through alleviation of oxidative stresses or processing of poly-ubiquitinated proteins. Required for resistance to the fungal pathogen Golovinomyces cichoracearum. The sequence is that of 26S proteasome regulatory subunit 4 homolog A from Arabidopsis thaliana (Mouse-ear cress).